The chain runs to 549 residues: Sorting nexin-33 (549 aa).

The SH3 domain maps to 1–61 (MALKARALYS…PASYVEILRP (61 aa)). Residues 66 to 83 (VQVDYSGHTQGYTDSPHQ) are compositionally biased toward polar residues. Positions 66–137 (VQVDYSGHTQ…RPEYTHRPRP (72 aa)) are disordered. Positions 86–101 (YDDDEEDDDDWDDWDD) are enriched in acidic residues. Residues 110-119 (SGSNGVSRSQ) are compositionally biased toward polar residues. Residues 127–137 (PRPEYTHRPRP) are compositionally biased toward basic and acidic residues. Positions 205-315 (FSCSVEEPTK…HFLSCQDEKQ (111 aa)) constitute a PX domain. Residues 346 to 549 (LQDVEERVDV…EKTLHMYDDL (204 aa)) enclose the BAR domain.

It belongs to the sorting nexin family.

It localises to the cytoplasm. Its subcellular location is the cytosol. The protein localises to the membrane. It is found in the cytoplasmic vesicle membrane. Plays a role in the reorganization of the cytoskeleton, endocytosis and cellular vesicle trafficking, both during interphase and at the end of mitotic cell divisions. Required for efficient progress through mitosis and cytokinesis. Required for normal formation of the cleavage furrow at the end of mitosis. Modulates endocytosis of cell-surface proteins. Promotes membrane tubulation (in vitro). May promote the formation of macropinosomes. The protein is Sorting nexin-33 (snx33) of Xenopus tropicalis (Western clawed frog).